Here is a 142-residue protein sequence, read N- to C-terminus: Small ribosomal subunit protein uS12 (142 aa).

Residues Met-1 to Gln-44 form a disordered region. A compositionally biased stretch (basic residues) spans Ala-7–His-18. Residues Arg-19–Pro-38 are compositionally biased toward basic and acidic residues.

This sequence belongs to the universal ribosomal protein uS12 family. In terms of assembly, part of the 30S ribosomal subunit.

Its function is as follows. With S4 and S5 plays an important role in translational accuracy. Located at the interface of the 30S and 50S subunits. This is Small ribosomal subunit protein uS12 from Haloarcula marismortui (strain ATCC 43049 / DSM 3752 / JCM 8966 / VKM B-1809) (Halobacterium marismortui).